The chain runs to 277 residues: MEAPGPAQAAAAESNSREVTEDAADWAPALCPSPEARSPEAPAYRLQDCDALVTMGTGTFGRVHLVKEKTAKHFFALKVMSIPDVIRRKQEQHVHNEKSVLKEVSHPFLIRLFWTWHEERFLYMLMEYVPGGELFSYLRNRGHFSSTTGLFYSAEIICAIEYLHSKEIVYRDLKPENILLDRDGHIKLTDFGFAKKLVDRTWTLCGTPEYLAPEVIQSKGHGRAVDWWALGILIFEMLSGFPPFFDDNPFGIYQKILAGKLYFPRHLDFHVKTGRMM.

The segment covering 1–12 (MEAPGPAQAAAA) has biased composition (low complexity). The interval 1–40 (MEAPGPAQAAAAESNSREVTEDAADWAPALCPSPEARSPE) is disordered. The Protein kinase domain maps to 49 to 277 (CDALVTMGTG…DFHVKTGRMM (229 aa)). ATP-binding positions include 55–63 (MGTGTFGRV) and lysine 78. The active-site Proton acceptor is the aspartate 172. At threonine 203 the chain carries Phosphothreonine.

Belongs to the protein kinase superfamily. AGC Ser/Thr protein kinase family. cAMP subfamily. As to expression, ubiquitous.

It catalyses the reaction L-seryl-[protein] + ATP = O-phospho-L-seryl-[protein] + ADP + H(+). The catalysed reaction is L-threonyl-[protein] + ATP = O-phospho-L-threonyl-[protein] + ADP + H(+). The chain is Putative serine/threonine-protein kinase PRKY (PRKY) from Homo sapiens (Human).